The primary structure comprises 423 residues: Hemoglobinase (423 aa).

An N-terminal signal peptide occupies residues 1–18 (MFYSIFFIHILRIVLVDC). The propeptide occupies 19 to 29 (NEYSEENVDDR). Residues histidine 145 and cysteine 186 contribute to the active site. The tract at residues 286 to 307 (RKKASTEHDEPPMKPKDSIPSR) is disordered. Positions 286-423 (RKKASTEHDE…INGVIRKVCG (138 aa)) are excised as a propeptide. Over residues 289 to 305 (ASTEHDEPPMKPKDSIP) the composition is skewed to basic and acidic residues.

The protein belongs to the peptidase C13 family. As to expression, gut.

The catalysed reaction is Hydrolysis of proteins and small molecule substrates at -Asn-|-Xaa- bonds.. Functionally, this protease is used by the parasite for degradation of the host globin. In Schistosoma japonicum (Blood fluke), this protein is Hemoglobinase (HAEM).